The following is a 340-amino-acid chain: Guanine nucleotide-binding protein G(I)/G(S)/G(T) subunit beta-1 (340 aa).

WD repeat units follow at residues 53–83, 95–125, 141–170, 182–212, 224–254, 268–298, and 310–340; these read GHLA…IIWD, LRSS…PIYN, GHTG…ALWD, GHTG…KLWD, GHES…RLFD, NIIC…NVWD, and GHDN…KIWN.

This sequence belongs to the WD repeat G protein beta family. In terms of assembly, g proteins are composed of 3 units, alpha, beta and gamma.

Its function is as follows. Guanine nucleotide-binding proteins (G proteins) are involved as a modulator or transducer in various transmembrane signaling systems. The beta and gamma chains are required for the GTPase activity, for replacement of GDP by GTP, and for G protein-effector interaction. The sequence is that of Guanine nucleotide-binding protein G(I)/G(S)/G(T) subunit beta-1 (gnb1) from Xenopus laevis (African clawed frog).